The following is a 483-amino-acid chain: Aspartyl/glutamyl-tRNA(Asn/Gln) amidotransferase subunit B (483 aa).

The protein belongs to the GatB/GatE family. GatB subfamily. As to quaternary structure, heterotrimer of A, B and C subunits.

The enzyme catalyses L-glutamyl-tRNA(Gln) + L-glutamine + ATP + H2O = L-glutaminyl-tRNA(Gln) + L-glutamate + ADP + phosphate + H(+). The catalysed reaction is L-aspartyl-tRNA(Asn) + L-glutamine + ATP + H2O = L-asparaginyl-tRNA(Asn) + L-glutamate + ADP + phosphate + 2 H(+). In terms of biological role, allows the formation of correctly charged Asn-tRNA(Asn) or Gln-tRNA(Gln) through the transamidation of misacylated Asp-tRNA(Asn) or Glu-tRNA(Gln) in organisms which lack either or both of asparaginyl-tRNA or glutaminyl-tRNA synthetases. The reaction takes place in the presence of glutamine and ATP through an activated phospho-Asp-tRNA(Asn) or phospho-Glu-tRNA(Gln). This Anaeromyxobacter sp. (strain Fw109-5) protein is Aspartyl/glutamyl-tRNA(Asn/Gln) amidotransferase subunit B.